Consider the following 369-residue polypeptide: Outer membrane protein P2 (369 aa).

An N-terminal signal peptide occupies residues 1–20; that stretch reads MKKTLAALIVGAFAASAANA.

The protein belongs to the Gram-negative porin family. Homotrimer.

It localises to the cell outer membrane. Functionally, forms pores that allow passive diffusion of small molecules across the outer membrane. The sequence is that of Outer membrane protein P2 (ompP2) from Haemophilus influenzae.